The following is a 224-amino-acid chain: MGQKINPNGFRLGVIHDWESKWYADKGYKETLNEDLRIRKFISKKLKDASVSTVEIERAANRINISIHTAKPGMVIGKGGSEVEALRKQLNALTDKQVHINIVEIKKPDLDAELVADSIARQLEARIAFRRAMRQATQRAMRAGAKGIKVQTSGRLNGADMARREWHTEGRVPLQTLRADIDYAWVNAFTTYGEIGVQVWINRGEILPTRKNKPASKPTKGGNR.

In terms of domain architecture, KH type-2 spans 38-106 (IRKFISKKLK…QVHINIVEIK (69 aa)).

The protein belongs to the universal ribosomal protein uS3 family. As to quaternary structure, part of the 30S ribosomal subunit. Forms a tight complex with proteins S10 and S14.

Functionally, binds the lower part of the 30S subunit head. Binds mRNA in the 70S ribosome, positioning it for translation. This Lactobacillus helveticus (strain DPC 4571) protein is Small ribosomal subunit protein uS3.